We begin with the raw amino-acid sequence, 509 residues long: Protein OS-9 homolog (509 aa).

The N-terminal stretch at 1-23 (MRRQSRIVASLLVLACASSGAFA) is a signal peptide. The segment covering 64-74 (SPDLNDISEQT) has biased composition (polar residues). Positions 64-91 (SPDLNDISEQTPLKDESEESIRDGSSGE) are disordered. Residues 75 to 91 (PLKDESEESIRDGSSGE) are compositionally biased toward basic and acidic residues. N120 carries an N-linked (GlcNAc...) asparagine glycan. One can recognise an MRH domain in the interval 151–291 (GKCLYYISGW…LIYTPRLCND (141 aa)). C153 and C166 form a disulfide bridge. The a mannooligosaccharide derivative site is built by W160, W161, Q173, D246, R252, E273, and Y279. 2 disulfide bridges follow: C245/C277 and C260/C289. The interval 433-509 (GVVDTDEDEE…GSEEIFKDEL (77 aa)) is disordered. The span at 436-451 (DTDEDEEDGYENEEGE) shows a compositional bias: acidic residues. The span at 452–461 (TDKREQRENT) shows a compositional bias: basic and acidic residues. Acidic residues predominate over residues 489–502 (RSEDGEDPDVDGSE). Residues 506–509 (KDEL) carry the Prevents secretion from ER motif.

The protein belongs to the OS-9 family. Interacts with missfolded ER lumenal proteins.

Its subcellular location is the endoplasmic reticulum membrane. Lectin involved in the quality control of the secretory pathway. As a member of the endoplasmic reticulum-associated degradation lumenal (ERAD-L) surveillance system, targets misfolded endoplasmic reticulum lumenal glycoproteins for degradation. The polypeptide is Protein OS-9 homolog (yos9) (Emericella nidulans (strain FGSC A4 / ATCC 38163 / CBS 112.46 / NRRL 194 / M139) (Aspergillus nidulans)).